The chain runs to 325 residues: Tetraacyldisaccharide 4'-kinase (325 aa).

55–62 (TAGGNGKT) serves as a coordination point for ATP.

Belongs to the LpxK family.

It catalyses the reaction a lipid A disaccharide + ATP = a lipid IVA + ADP + H(+). The protein operates within glycolipid biosynthesis; lipid IV(A) biosynthesis; lipid IV(A) from (3R)-3-hydroxytetradecanoyl-[acyl-carrier-protein] and UDP-N-acetyl-alpha-D-glucosamine: step 6/6. In terms of biological role, transfers the gamma-phosphate of ATP to the 4'-position of a tetraacyldisaccharide 1-phosphate intermediate (termed DS-1-P) to form tetraacyldisaccharide 1,4'-bis-phosphate (lipid IVA). The chain is Tetraacyldisaccharide 4'-kinase from Salmonella typhi.